The following is a 127-amino-acid chain: Modulator protein MzrA (127 aa).

Over 1-10 the chain is Cytoplasmic; it reads MLKPRITARQ. The helical transmembrane segment at 11 to 31 threads the bilayer; sequence LIWISAFLLMLTILMMTWSTL. The Periplasmic segment spans residues 32 to 127; that stretch reads RQQESTLAIR…RLRESSHRFG (96 aa).

This sequence belongs to the MzrA family. Interacts with EnvZ.

It is found in the cell inner membrane. Modulates the activity of the EnvZ/OmpR two-component regulatory system, probably by directly modulating EnvZ enzymatic activity and increasing stability of phosphorylated OmpR. The protein is Modulator protein MzrA of Salmonella agona (strain SL483).